A 235-amino-acid polypeptide reads, in one-letter code: 6-phosphogluconolactonase (235 aa).

Belongs to the glucosamine/galactosamine-6-phosphate isomerase family. 6-phosphogluconolactonase subfamily.

It carries out the reaction 6-phospho-D-glucono-1,5-lactone + H2O = 6-phospho-D-gluconate + H(+). Its pathway is carbohydrate degradation; pentose phosphate pathway; D-ribulose 5-phosphate from D-glucose 6-phosphate (oxidative stage): step 2/3. In terms of biological role, hydrolysis of 6-phosphogluconolactone to 6-phosphogluconate. This is 6-phosphogluconolactonase (pgl) from Borreliella burgdorferi (strain ATCC 35210 / DSM 4680 / CIP 102532 / B31) (Borrelia burgdorferi).